A 448-amino-acid polypeptide reads, in one-letter code: Antizyme inhibitor 1 (448 aa).

Belongs to the Orn/Lys/Arg decarboxylase class-II family. ODC antizyme inhibitor subfamily. In terms of assembly, monomer. Interacts with OAZ1 and OAZ3; this interaction disrupts the interaction between the antizyme and ODC1. Ubiquitinated, leading to its proteasomal degradation; a process that is reduced in presence of antizyme OAZ1. In terms of tissue distribution, expressed during testis development.

It is found in the nucleus. In terms of biological role, antizyme inhibitor (AZI) protein that positively regulates ornithine decarboxylase (ODC) activity and polyamine uptake. AZI is an enzymatically inactive ODC homolog that counteracts the negative effect of ODC antizymes (AZs) OAZ1, OAZ2 and OAZ3 on ODC activity by competing with ODC for antizyme-binding. Inhibits antizyme-dependent ODC degradation and releases ODC monomers from their inactive complex with antizymes, leading to formation of the catalytically active ODC homodimer and restoring polyamine production. This Mus musculus (Mouse) protein is Antizyme inhibitor 1 (Azin1).